Reading from the N-terminus, the 302-residue chain is Glycine--tRNA ligase alpha subunit (302 aa).

Belongs to the class-II aminoacyl-tRNA synthetase family. As to quaternary structure, tetramer of two alpha and two beta subunits.

It localises to the cytoplasm. It catalyses the reaction tRNA(Gly) + glycine + ATP = glycyl-tRNA(Gly) + AMP + diphosphate. This Xanthomonas campestris pv. campestris (strain 8004) protein is Glycine--tRNA ligase alpha subunit.